The sequence spans 186 residues: Casparian strip membrane protein 5 (186 aa).

Residues 1-23 (MEHGEISSKAPLVAPVAAGVNRA) are Cytoplasmic-facing. A helical membrane pass occupies residues 24-44 (VAVVDTFLRFIAIIGTIGSAI). Over 45–73 (AMGTTNETLPFFTQFIQFEAKYSDLPSFT) the chain is Extracellular. The N-linked (GlcNAc...) asparagine glycan is linked to asparagine 50. The chain crosses the membrane as a helical span at residues 74–94 (FFVAANAVVCTYLVLSIPLSI). Over 95–106 (VHILRPRARYSR) the chain is Cytoplasmic. The chain crosses the membrane as a helical span at residues 107 to 127 (LFLVFFDTAMLALLTAGASAA). The Extracellular segment spans residues 128–160 (AAIVYLAHKGNVRANWFSICQQFDSFCERISGS). Residues 161-181 (LIGSFAAMVLLVVLITLSAFA) traverse the membrane as a helical segment. The Cytoplasmic segment spans residues 182-186 (LARRH).

The protein belongs to the Casparian strip membrane proteins (CASP) family. In terms of assembly, homodimer and heterodimers.

The protein resides in the cell membrane. Regulates membrane-cell wall junctions and localized cell wall deposition. Required for establishment of the Casparian strip membrane domain (CSD) and the subsequent formation of Casparian strips, a cell wall modification of the root endodermis that determines an apoplastic barrier between the intraorganismal apoplasm and the extraorganismal apoplasm and prevents lateral diffusion. The protein is Casparian strip membrane protein 5 of Oryza sativa subsp. japonica (Rice).